Reading from the N-terminus, the 710-residue chain is MSMEKTFNLARRDDGIAILTMDVPGETMNTLKEQFGPEISEILTEIKADSSIKGLVVISGKADSFVAGADITMLAACKNEEQAKTLSQQGHVVFAELEGLSIPVVAAINGACLGGGLELALACHLRVCSDDKKTMLGVPEVQLGLLPGGGGTQRLPRLVGITTALDMMLTGKQIRPKQALKMGLVNDVVPNSILLETAVELAKKGKQAAKPVVQSKINQFLESTSFTRDIIFDQARKQVLKKTQGNYPAPAKIIDCVRQGMNKGMVKGLEVEATHFANLVMSKESAALRSLFFATTEMKKETGAEGAVPRKVKKVMVLGGGLMGGGIASVTTTKAKIPARVKDISEQGLSNALSYAYKLLDKGVKRRHMTPIARDNIMALMTTTTEYTGIKDADIVVEAVFEDLALKHKMVQDVERECGENTIFASNTSSLPIGQIAAAASRPENVIGLHYFSPVEKMPLVEVIAHKTTSPETIATTVAFARKQGKTPIVVQDGAGFYVNRILALYMNEAAQLLLEGQRIEHLDRALVKFGFPVGPMTLLDEVGIDVGAKISPILEKELGDRFKAPAAFDKLLADDRKGRKNGKGFYQYGPKAKKAKLVDESVYKVLDILIASDKEAKGVAERCTIQMLNEAVRCLEEGIIASARDGDIGAIFGIGFPPFLGGPFRYIDTLGASNLVATLQGYQSLYGDRFAPCDTLVKMASDGSQFYKK.

The segment at 1 to 190 (MSMEKTFNLA…KMGLVNDVVP (190 aa)) is enoyl-CoA hydratase. Positions 310–710 (RKVKKVMVLG…ASDGSQFYKK (401 aa)) are 3-hydroxyacyl-CoA dehydrogenase.

In the N-terminal section; belongs to the enoyl-CoA hydratase/isomerase family. The protein in the central section; belongs to the 3-hydroxyacyl-CoA dehydrogenase family. Heterotetramer of two alpha chains (FadJ) and two beta chains (FadI).

Its subcellular location is the cytoplasm. It carries out the reaction a (3S)-3-hydroxyacyl-CoA = a (2E)-enoyl-CoA + H2O. The catalysed reaction is a 4-saturated-(3S)-3-hydroxyacyl-CoA = a (3E)-enoyl-CoA + H2O. It catalyses the reaction a (3S)-3-hydroxyacyl-CoA + NAD(+) = a 3-oxoacyl-CoA + NADH + H(+). The enzyme catalyses (3S)-3-hydroxybutanoyl-CoA = (3R)-3-hydroxybutanoyl-CoA. It functions in the pathway lipid metabolism; fatty acid beta-oxidation. Functionally, catalyzes the formation of a hydroxyacyl-CoA by addition of water on enoyl-CoA. Also exhibits 3-hydroxyacyl-CoA epimerase and 3-hydroxyacyl-CoA dehydrogenase activities. In Shewanella frigidimarina (strain NCIMB 400), this protein is Fatty acid oxidation complex subunit alpha.